The sequence spans 262 residues: tRNA pseudouridine synthase A (262 aa).

Asp-51 acts as the Nucleophile in catalysis. Tyr-106 contributes to the substrate binding site.

Belongs to the tRNA pseudouridine synthase TruA family.

The catalysed reaction is uridine(38/39/40) in tRNA = pseudouridine(38/39/40) in tRNA. In terms of biological role, formation of pseudouridine at positions 38, 39 and 40 in the anticodon stem and loop of transfer RNAs. This Pyrococcus horikoshii (strain ATCC 700860 / DSM 12428 / JCM 9974 / NBRC 100139 / OT-3) protein is tRNA pseudouridine synthase A.